The following is a 560-amino-acid chain: Arginine--tRNA ligase (560 aa).

Positions 122–132 match the 'HIGH' region motif; the sequence is ANPNGPLHVGH.

The protein belongs to the class-I aminoacyl-tRNA synthetase family.

It is found in the cytoplasm. The enzyme catalyses tRNA(Arg) + L-arginine + ATP = L-arginyl-tRNA(Arg) + AMP + diphosphate. This is Arginine--tRNA ligase from Methanosphaera stadtmanae (strain ATCC 43021 / DSM 3091 / JCM 11832 / MCB-3).